We begin with the raw amino-acid sequence, 216 residues long: ATP synthase subunit a (216 aa).

The next 7 membrane-spanning stretches (helical) occupy residues Met1–Leu21, Leu62–Phe82, Asn88–Phe108, Phe119–Ile139, Leu149–Lys169, Leu174–Ile194, and Thr196–His216.

The protein belongs to the ATPase A chain family. F-type ATPases have 2 components, CF(1) - the catalytic core - and CF(0) - the membrane proton channel. CF(1) has five subunits: alpha(3), beta(3), gamma(1), delta(1), epsilon(1). CF(0) has three main subunits: a(1), b(2) and c(9-12). The alpha and beta chains form an alternating ring which encloses part of the gamma chain. CF(1) is attached to CF(0) by a central stalk formed by the gamma and epsilon chains, while a peripheral stalk is formed by the delta and b chains.

The protein resides in the cell inner membrane. In terms of biological role, key component of the proton channel; it plays a direct role in the translocation of protons across the membrane. This is ATP synthase subunit a from Aquifex aeolicus (strain VF5).